The sequence spans 636 residues: Fructose-1,6-bisphosphatase class 3 (636 aa).

It belongs to the FBPase class 3 family. Mn(2+) is required as a cofactor.

It carries out the reaction beta-D-fructose 1,6-bisphosphate + H2O = beta-D-fructose 6-phosphate + phosphate. It functions in the pathway carbohydrate biosynthesis; gluconeogenesis. This chain is Fructose-1,6-bisphosphatase class 3, found in Streptococcus gordonii (strain Challis / ATCC 35105 / BCRC 15272 / CH1 / DL1 / V288).